The chain runs to 303 residues: Diaminopimelate epimerase (303 aa).

Residue Asn-14 participates in substrate binding. Low complexity predominate over residues 60–74 (PVSSAGATADAAAGR). The tract at residues 60 to 86 (PVSSAGATADAAAGRPPQPSAGRPPQP) is disordered. Over residues 75–86 (PPQPSAGRPPQP) the composition is skewed to pro residues. Position 97 (Asn-97) interacts with substrate. Residue Cys-106 is the Proton donor of the active site. Residues 107-108 (GN), Asn-178, Asn-209, and 227-228 (ER) contribute to the substrate site. Cys-236 functions as the Proton acceptor in the catalytic mechanism. 237-238 (GS) is a binding site for substrate.

Belongs to the diaminopimelate epimerase family. As to quaternary structure, homodimer.

Its subcellular location is the cytoplasm. It carries out the reaction (2S,6S)-2,6-diaminopimelate = meso-2,6-diaminopimelate. Its pathway is amino-acid biosynthesis; L-lysine biosynthesis via DAP pathway; DL-2,6-diaminopimelate from LL-2,6-diaminopimelate: step 1/1. Its function is as follows. Catalyzes the stereoinversion of LL-2,6-diaminopimelate (L,L-DAP) to meso-diaminopimelate (meso-DAP), a precursor of L-lysine and an essential component of the bacterial peptidoglycan. In Acidothermus cellulolyticus (strain ATCC 43068 / DSM 8971 / 11B), this protein is Diaminopimelate epimerase.